A 484-amino-acid polypeptide reads, in one-letter code: Trigger factor (484 aa).

The region spanning 162 to 243 (GDFISIDLSA…VKSVKERELP (82 aa)) is the PPIase FKBP-type domain. The disordered stretch occupies residues 427–484 (DGNTIDTSEFFGKPPENDVTDLLDDDADGDAGVDADGDTENSAEPADADSADAAQGAG). Residues 444–476 (DVTDLLDDDADGDAGVDADGDTENSAEPADADS) show a composition bias toward acidic residues.

The protein belongs to the FKBP-type PPIase family. Tig subfamily.

Its subcellular location is the cytoplasm. It catalyses the reaction [protein]-peptidylproline (omega=180) = [protein]-peptidylproline (omega=0). In terms of biological role, involved in protein export. Acts as a chaperone by maintaining the newly synthesized protein in an open conformation. Functions as a peptidyl-prolyl cis-trans isomerase. In Mycobacterium marinum (strain ATCC BAA-535 / M), this protein is Trigger factor.